Here is a 331-residue protein sequence, read N- to C-terminus: Glycerophosphodiester phosphodiesterase 1 (331 aa).

Topologically, residues 1-3 are cytoplasmic; sequence MWL. Residues 4–24 form a helical membrane-spanning segment; the sequence is WEDQGGLLGPFSFVLVLLLVV. At 25 to 248 the chain is on the lumenal side; it reads TRSPFNACVL…PRYSVFWKQS (224 aa). Positions 65-331 constitute a GP-PDE domain; that stretch reads VSAIAHRGGS…SMLEDCAPHF (267 aa). Positions 97 and 99 each coordinate Mg(2+). An N-linked (GlcNAc...) asparagine glycan is attached at N168. Position 174 (D174) interacts with Mg(2+). A helical membrane pass occupies residues 249-269; it reads VFVVLDILLDWSMHNVLWYLC. Over 270 to 331 the chain is Cytoplasmic; the sequence is GISAFLMQKD…SMLEDCAPHF (62 aa).

Belongs to the glycerophosphoryl diester phosphodiesterase family. Interacts with PRAF2. Interacts with RGS16. Mg(2+) is required as a cofactor. N-glycosylated. Detected in heart, brain, lung, liver, skeletal muscle, kidney, pituitary and testis.

The protein resides in the cell membrane. It localises to the cytoplasmic vesicle membrane. It catalyses the reaction sn-glycero-3-phospho-1D-myo-inositol + H2O = myo-inositol + sn-glycerol 3-phosphate + H(+). The catalysed reaction is 1-O-(1Z-octadecenyl)-sn-glycero-3-phospho-(N-5Z,8Z,11Z,14Z-eicosatetraenoyl)-ethanolamine + H2O = 1-O-(1Z-octadecenyl)-sn-glycero-3-phosphate + N-(5Z,8Z,11Z,14Z-eicosatetraenoyl)-ethanolamine + H(+). It carries out the reaction 1-O-(1Z-octadecenyl)-sn-glycero-3-phospho-(N-9Z-octadecenoyl)-ethanolamine + H2O = 1-O-(1Z-octadecenyl)-sn-glycero-3-phosphate + N-(9Z-octadecenoyl) ethanolamine + H(+). The enzyme catalyses 1-O-(1Z-octadecenyl)-sn-glycero-3-phospho-N-hexadecanoyl-ethanolamine + H2O = 1-O-(1Z-octadecenyl)-sn-glycero-3-phosphate + N-hexadecanoylethanolamine + H(+). It catalyses the reaction N-(4Z,7Z,10Z,13Z,16Z,19Z)-docosahexaenoyl-sn-glycero-3-phosphoethanolamine + H2O = N-(4Z,7Z,10Z,13Z,16Z,19Z)-docosahexaenoyl ethanolamine + sn-glycerol 3-phosphate + H(+). The catalysed reaction is N-eicosanoyl-sn-glycero-3-phosphoethanolamine + H2O = N-eicosanoyl ethanolamine + sn-glycerol 3-phosphate + H(+). It carries out the reaction N-hexadecanoyl-sn-glycero-3-phosphoethanolamine + H2O = N-hexadecanoylethanolamine + sn-glycerol 3-phosphate + H(+). The enzyme catalyses N-(9Z-octadecenoyl)-sn-glycero-3-phosphoethanolamine + H2O = N-(9Z-octadecenoyl) ethanolamine + sn-glycerol 3-phosphate + H(+). It catalyses the reaction N-(5Z,8Z,11Z,14Z-eicosatetraenoyl)-sn-glycero-3-phosphoethanolamine + H2O = N-(5Z,8Z,11Z,14Z-eicosatetraenoyl)-ethanolamine + sn-glycerol 3-phosphate + H(+). Its activity is regulated as follows. Inhibited by EDTA, calcium chloride, and zinc chloride. Enhanced by magnesium chloride. Glycerophosphodiester phosphodiesterase activity can be modulated by G-protein signaling pathways. Hydrolyzes the phosphodiester bond of glycerophosphodiesters such as glycerophosphoinositol (GroPIns) and glycerophosphoethanolamine (GroPEth), to yield a glycerol phosphate and an alcohol. Hydrolyzes glycerophospho-N-acylethanolamines to N-acylethanolamines in the brain and participates in bioactive N-acylethanolamine biosynthesis such as anandamide (an endocannabinoid), N-palmitoylethanolamine (an anti-inflammatory), and N-oleoylethanolamine (an anorexic). In addition, has a lysophospholipase D activity by hydrolyzing N-acyl-lysoplasmenylethanolamine (N-acyl-lysoPlsEt) to N-acylethanolamine. However lysophospholipase D activity is lower than glycerophosphodiester phosphodiesterase activity. Has little or no activity towards glycerophosphocholine. This is Glycerophosphodiester phosphodiesterase 1 from Rattus norvegicus (Rat).